A 118-amino-acid polypeptide reads, in one-letter code: Large ribosomal subunit protein bL20c (118 aa).

Belongs to the bacterial ribosomal protein bL20 family.

Its subcellular location is the plastid. Functionally, binds directly to 23S ribosomal RNA and is necessary for the in vitro assembly process of the 50S ribosomal subunit. It is not involved in the protein synthesizing functions of that subunit. The sequence is that of Large ribosomal subunit protein bL20c (rpl20) from Cuscuta reflexa (Southern Asian dodder).